The primary structure comprises 132 residues: DNA-directed RNA polymerase subunit omega (132 aa).

Belongs to the RNA polymerase subunit omega family. The RNAP catalytic core consists of 2 alpha, 1 beta, 1 beta' and 1 omega subunit. When a sigma factor is associated with the core the holoenzyme is formed, which can initiate transcription.

It catalyses the reaction RNA(n) + a ribonucleoside 5'-triphosphate = RNA(n+1) + diphosphate. Promotes RNA polymerase assembly. Latches the N- and C-terminal regions of the beta' subunit thereby facilitating its interaction with the beta and alpha subunits. This Bartonella bacilliformis (strain ATCC 35685 / KC583 / Herrer 020/F12,63) protein is DNA-directed RNA polymerase subunit omega.